The sequence spans 1173 residues: Protein GIGANTEA (1173 aa).

Disordered stretches follow at residues 150–187 (EQQNGDTERNCLSKATTSGSPTSEPKAGSPTQHERKPL), 604–641 (SGSKRPRSEYASTTENIEANQPVSNNQTANRKSRNVKG), and 840–863 (SRTEMNPRGNHKYARHSDEGSGRP). Composition is skewed to polar residues over residues 162–172 (SKATTSGSPTS) and 613–633 (YASTTENIEANQPVSNNQTAN). The span at 854–863 (RHSDEGSGRP) shows a compositional bias: basic and acidic residues.

It belongs to the GIGANTEA family. As to quaternary structure, interacts with SPY. Interacts with ADO1 (via N-terminus) and ADO2. Interacts with ADO3 (via N-terminus). Interacts (via N-terminus) with CDF1. Interacts (via N-terminus) with TCP4. Widely expressed with highest levels in inflorescence apices, young flowers and young siliques.

Its subcellular location is the nucleus. The protein localises to the cytoplasm. In terms of biological role, involved in regulation of circadian rhythm and photoperiodic flowering. May play a role in maintenance of circadian amplitude and period length. Is involved in phytochrome B signaling. Stabilizes ADO3 and the circadian photoreceptor ADO1/ZTL. Regulates 'CONSTANS' (CO) in the long-day flowering pathway by modulating the ADO3-dependent protein stability of CDF1 and CDF2, but is not essential to activate CO transcription. Regulates, via the microRNA miR172, a CO-independent pathway that promotes photoperiodic flowering by inducing 'FLOWERING LOCUS T'. The chain is Protein GIGANTEA (GI) from Arabidopsis thaliana (Mouse-ear cress).